The chain runs to 462 residues: 3-isopropylmalate dehydratase large subunit (462 aa).

Residues Cys-337, Cys-397, and Cys-400 each contribute to the [4Fe-4S] cluster site.

The protein belongs to the aconitase/IPM isomerase family. LeuC type 1 subfamily. Heterodimer of LeuC and LeuD. The cofactor is [4Fe-4S] cluster.

It catalyses the reaction (2R,3S)-3-isopropylmalate = (2S)-2-isopropylmalate. Its pathway is amino-acid biosynthesis; L-leucine biosynthesis; L-leucine from 3-methyl-2-oxobutanoate: step 2/4. Its function is as follows. Catalyzes the isomerization between 2-isopropylmalate and 3-isopropylmalate, via the formation of 2-isopropylmaleate. This is 3-isopropylmalate dehydratase large subunit from Listeria monocytogenes serovar 1/2a (strain ATCC BAA-679 / EGD-e).